A 566-amino-acid polypeptide reads, in one-letter code: Hexose transporter 2 (566 aa).

Residues 1 to 39 are disordered; it reads MSELETGTAAHGTPVENKSVSSSQASTPTNVGSRDDLKV. Polar residues predominate over residues 16–32; it reads ENKSVSSSQASTPTNVG. Residues 22-61 are Cytoplasmic-facing; sequence SSQASTPTNVGSRDDLKVDDDNHSVDAIELPKKPRSAYIT. A helical transmembrane segment spans residues 62–82; it reads VSILCLMVAFGGFVFGWDTGT. The Extracellular segment spans residues 83 to 112; the sequence is ISGFVNQTDFIRRFGQEKADGSHYLSNVRT. N-linked (GlcNAc...) asparagine glycosylation occurs at asparagine 88. A helical membrane pass occupies residues 113 to 133; the sequence is GLIVSIFNIGCAIGGIILSKL. The Cytoplasmic segment spans residues 134–140; that stretch reads GDMYGRR. Residues 141–161 form a helical membrane-spanning segment; the sequence is IGLMIVVLIYVVGIIIQIASI. Residues 162–166 lie on the Extracellular side of the membrane; it reads DKWYQ. Residues 167-187 form a helical membrane-spanning segment; the sequence is YFIGRIISGLGVGGISVLSPM. Residues 188–198 are Cytoplasmic-facing; sequence LISETAPKHIR. The chain crosses the membrane as a helical span at residues 199–219; that stretch reads GTLVSFYQLMITFGIFLGYCT. The Extracellular portion of the chain corresponds to 220 to 233; sequence NYGTKTYSNSVQWR. Residues 234–254 form a helical membrane-spanning segment; that stretch reads VPLGLCFAWAIFMITGMLFVP. The Cytoplasmic portion of the chain corresponds to 255–333; that stretch reads ESPRFLVEKD…MGMLIQSFQQ (79 aa). Residues 334 to 353 traverse the membrane as a helical segment; it reads LTGNNYFFYYGTTIFNSVGM. The Extracellular segment spans residues 354–357; it reads DDSF. Residues 358-378 form a helical membrane-spanning segment; it reads ETSIVLGIVNFASTFVAIYVV. Topologically, residues 379–385 are cytoplasmic; the sequence is DKFGRRK. The chain crosses the membrane as a helical span at residues 386-406; sequence CLLWGAAAMTACMVVFASVGV. Over 407–428 the chain is Extracellular; sequence TRLWPDGANHPETASKGAGNCM. Residues 429–449 form a helical membrane-spanning segment; that stretch reads IVFACFYIFCFATSWAPIAYV. The Cytoplasmic portion of the chain corresponds to 450 to 465; the sequence is VVAESYPLRVKAKCMA. A helical transmembrane segment spans residues 466–486; it reads IATASNWIWGFLNGFFTPFIT. Topologically, residues 487–492 are extracellular; that stretch reads SAIHFY. Residues 493 to 513 traverse the membrane as a helical segment; the sequence is YGYVFMGCLVAMFFYVFFFVP. Residues 514 to 566 are Cytoplasmic-facing; it reads ETKGLTLEEVQEMWEEGVLPWKSSSWVPSSRRNAGYDVDALQHDEKPWYKAML.

This sequence belongs to the major facilitator superfamily. Sugar transporter (TC 2.A.1.1) family.

It localises to the membrane. Functionally, probable glucose transporter. This chain is Hexose transporter 2 (KHT2), found in Kluyveromyces lactis (Yeast).